Reading from the N-terminus, the 318-residue chain is Methenyltetrahydromethanopterin cyclohydrolase (318 aa).

The protein belongs to the MCH family.

The protein localises to the cytoplasm. It carries out the reaction 5,10-methenyl-5,6,7,8-tetrahydromethanopterin + H2O = N(5)-formyl-5,6,7,8-tetrahydromethanopterin + H(+). It participates in one-carbon metabolism; methanogenesis from CO(2); 5,10-methenyl-5,6,7,8-tetrahydromethanopterin from CO(2): step 3/3. Functionally, catalyzes the reversible interconversion of 5-formyl-H(4)MPT to methenyl-H(4)MPT(+). This chain is Methenyltetrahydromethanopterin cyclohydrolase, found in Methanocella arvoryzae (strain DSM 22066 / NBRC 105507 / MRE50).